The chain runs to 36 residues: Protein YnfP (36 aa).

This Escherichia coli (strain K12) protein is Protein YnfP.